We begin with the raw amino-acid sequence, 434 residues long: Glucose-1-phosphate adenylyltransferase (434 aa).

Alpha-D-glucose 1-phosphate-binding positions include Tyr-112, Gly-178, 193-194 (EK), and Ser-211.

This sequence belongs to the bacterial/plant glucose-1-phosphate adenylyltransferase family. In terms of assembly, homotetramer.

The catalysed reaction is alpha-D-glucose 1-phosphate + ATP + H(+) = ADP-alpha-D-glucose + diphosphate. It functions in the pathway glycan biosynthesis; glycogen biosynthesis. Involved in the biosynthesis of ADP-glucose, a building block required for the elongation reactions to produce glycogen. Catalyzes the reaction between ATP and alpha-D-glucose 1-phosphate (G1P) to produce pyrophosphate and ADP-Glc. In Mannheimia succiniciproducens (strain KCTC 0769BP / MBEL55E), this protein is Glucose-1-phosphate adenylyltransferase.